The sequence spans 187 residues: Ribulose bisphosphate carboxylase small subunit, chloroplastic (187 aa).

The transit peptide at 1 to 56 (MASSVMSTATVATGANAAQASMIASFNGLKSAASFPVTRKQDLDITSIASNGGRVE) directs the protein to the chloroplast.

Belongs to the RuBisCO small chain family. Heterohexadecamer of 8 large and 8 small subunits.

The protein localises to the plastid. The protein resides in the chloroplast. In terms of biological role, ruBisCO catalyzes two reactions: the carboxylation of D-ribulose 1,5-bisphosphate, the primary event in carbon dioxide fixation, as well as the oxidative fragmentation of the pentose substrate. Both reactions occur simultaneously and in competition at the same active site. Although the small subunit is not catalytic it is essential for maximal activity. This Capsicum annuum (Capsicum pepper) protein is Ribulose bisphosphate carboxylase small subunit, chloroplastic.